The primary structure comprises 132 residues: Phosphoribosyl-ATP pyrophosphatase (132 aa).

The protein belongs to the PRA-PH family.

The protein localises to the cytoplasm. It catalyses the reaction 1-(5-phospho-beta-D-ribosyl)-ATP + H2O = 1-(5-phospho-beta-D-ribosyl)-5'-AMP + diphosphate + H(+). It functions in the pathway amino-acid biosynthesis; L-histidine biosynthesis; L-histidine from 5-phospho-alpha-D-ribose 1-diphosphate: step 2/9. The polypeptide is Phosphoribosyl-ATP pyrophosphatase (Acidovorax sp. (strain JS42)).